The sequence spans 601 residues: Elongation factor 4 (601 aa).

The region spanning 5 to 187 (EHIRNFSIIA…AIVERLPAPE (183 aa)) is the tr-type G domain. GTP-binding positions include 17-22 (DHGKST) and 134-137 (NKVD).

Belongs to the TRAFAC class translation factor GTPase superfamily. Classic translation factor GTPase family. LepA subfamily.

The protein localises to the cell inner membrane. The enzyme catalyses GTP + H2O = GDP + phosphate + H(+). In terms of biological role, required for accurate and efficient protein synthesis under certain stress conditions. May act as a fidelity factor of the translation reaction, by catalyzing a one-codon backward translocation of tRNAs on improperly translocated ribosomes. Back-translocation proceeds from a post-translocation (POST) complex to a pre-translocation (PRE) complex, thus giving elongation factor G a second chance to translocate the tRNAs correctly. Binds to ribosomes in a GTP-dependent manner. This is Elongation factor 4 from Nitratidesulfovibrio vulgaris (strain DSM 19637 / Miyazaki F) (Desulfovibrio vulgaris).